Reading from the N-terminus, the 683-residue chain is DNA ligase (683 aa).

NAD(+) contacts are provided by residues 36–40 (DAEYD), 85–86 (SL), and Glu119. The active-site N6-AMP-lysine intermediate is the Lys121. The NAD(+) site is built by Arg142, Glu179, Lys295, and Lys319. Zn(2+)-binding residues include Cys413, Cys416, Cys431, and Cys437. The region spanning 596-683 (TETLPLSGQT…EHQAHLGGEA (88 aa)) is the BRCT domain.

It belongs to the NAD-dependent DNA ligase family. LigA subfamily. Mg(2+) is required as a cofactor. It depends on Mn(2+) as a cofactor.

The catalysed reaction is NAD(+) + (deoxyribonucleotide)n-3'-hydroxyl + 5'-phospho-(deoxyribonucleotide)m = (deoxyribonucleotide)n+m + AMP + beta-nicotinamide D-nucleotide.. Functionally, DNA ligase that catalyzes the formation of phosphodiester linkages between 5'-phosphoryl and 3'-hydroxyl groups in double-stranded DNA using NAD as a coenzyme and as the energy source for the reaction. It is essential for DNA replication and repair of damaged DNA. This chain is DNA ligase, found in Hahella chejuensis (strain KCTC 2396).